The chain runs to 145 residues: Hemoglobin fetal subunit beta (145 aa).

The Globin domain occupies 1-145 (MLTAEEKASV…VANALAHRYH (145 aa)). Heme b-binding residues include His-62 and His-91.

This sequence belongs to the globin family. As to quaternary structure, heterotetramer of two alpha chains and two beta chains.

This chain is Hemoglobin fetal subunit beta, found in Ovis aries (Sheep).